Reading from the N-terminus, the 322-residue chain is tRNA-modifying protein YgfZ (322 aa).

Trp182 serves as a coordination point for folate.

Belongs to the tRNA-modifying YgfZ family.

It is found in the cytoplasm. Its function is as follows. Folate-binding protein involved in regulating the level of ATP-DnaA and in the modification of some tRNAs. It is probably a key factor in regulatory networks that act via tRNA modification, such as initiation of chromosomal replication. In Vibrio campbellii (strain ATCC BAA-1116), this protein is tRNA-modifying protein YgfZ.